The sequence spans 688 residues: SRSF protein kinase 2 (688 aa).

A disordered region spans residues 1–65; it reads MSVNSEKSSS…EQEDPADYCK (65 aa). Pro residues predominate over residues 22–43; that stretch reads LVPPPPPPPPPPPPPLPDPTPP. The segment covering 44-61 has biased composition (acidic residues); that stretch reads EPEEEILGSDDEEQEDPA. The residue at position 52 (serine 52) is a Phosphoserine. One can recognise a Protein kinase domain in the interval 81-684; the sequence is YHVIRKLGWG…ASAGECLRHP (604 aa). Residues 87-95 and lysine 110 contribute to the ATP site; that span reads LGWGHFSTV. Aspartate 214 (proton acceptor) is an active-site residue. 3 disordered regions span residues 239-277, 329-444, and 469-501; these read WQKA…KKQK, GLEE…GRHK, and SVLS…TGDL. The span at 265-277 shows a compositional bias: basic residues; it reads SKNKKKKLKKKQK. Serine 380 carries the phosphoserine modification. Residues 397 to 421 are compositionally biased toward acidic residues; the sequence is QLDDEDDDEEDCPNPEEYNLDEPNA. Residues 423-433 are compositionally biased toward polar residues; that stretch reads SDYTYSSSYEQ. A Phosphoserine modification is found at serine 475. Phosphothreonine is present on threonine 478. A phosphoserine mark is found at serine 484, serine 486, and serine 490. Threonine 492 carries the phosphothreonine; by PKB/AKT1 modification. A phosphoserine mark is found at serine 494 and serine 497. Residue serine 588 is modified to Phosphoserine; by CK2.

It belongs to the protein kinase superfamily. CMGC Ser/Thr protein kinase family. As to quaternary structure, associates with U4/U6-U5 tri-small nuclear ribonucleoproteins (U4/U6-U5 tri-snRNPs). Interacts with PKB/AKT1 in a phosphorylation-dependent manner. The phosphorylated form (by PKB/AKT1) interacts with YWHAB and YWHAE. Interaction with YWHAB suppresses its cleavage by caspases and inhibits the release of its N-terminal pro-apoptotic fragment. Interacts with SFN. Interacts with ACIN1. Interacts with POLR2A/RNA polymerase II; the interaction occurs during the co-transcriptional formation of inappropriate R-loops. Mg(2+) serves as cofactor. Post-translationally, phosphorylation at Thr-492 by PKB/AKT1 enhances its stimulatory activity in triggering cyclin-D1 (CCND1) expression and promoting apoptosis in neurons, which can be blocked by YWHAB. It also enhances its protein kinase activity toward ACIN1 and SRSF2, promotes its nuclear translocation and prevents its proteolytic cleavage. In terms of processing, proteolytically cleaved at Asp-139 and Asp-403 by caspase-3 during apoptotic cell death. Cleavage at Asp-139 which is the major site of cleavage, produces a small N-terminal fragment that translocates into nucleus and promotes VP16-induced apoptosis. In terms of tissue distribution, highly expressed in brain, moderately expressed in heart and skeletal muscle and at low levels in lung, liver, and kidney.

The protein resides in the cytoplasm. The protein localises to the nucleus. Its subcellular location is the nucleoplasm. It localises to the nucleus speckle. It is found in the chromosome. The enzyme catalyses L-seryl-[protein] + ATP = O-phospho-L-seryl-[protein] + ADP + H(+). It catalyses the reaction L-threonyl-[protein] + ATP = O-phospho-L-threonyl-[protein] + ADP + H(+). With respect to regulation, activated by phosphorylation on Ser-52 and Ser-588. Serine/arginine-rich protein-specific kinase which specifically phosphorylates its substrates at serine residues located in regions rich in arginine/serine dipeptides, known as RS domains and is involved in the phosphorylation of SR splicing factors and the regulation of splicing. Promotes neuronal apoptosis by up-regulating cyclin-D1 (CCND1) expression. This is done by the phosphorylation of SRSF2, leading to the suppression of p53/TP53 phosphorylation thereby relieving the repressive effect of p53/TP53 on cyclin-D1 (CCND1) expression. Phosphorylates ACIN1, and redistributes it from the nuclear speckles to the nucleoplasm, resulting in cyclin A1 but not cyclin A2 up-regulation. Plays an essential role in spliceosomal B complex formation via the phosphorylation of DDX23/PRP28. Probably by phosphorylating DDX23, leads to the suppression of incorrect R-loops formed during transcription; R-loops are composed of a DNA:RNA hybrid and the associated non-template single-stranded DNA. Can mediate hepatitis B virus (HBV) core protein phosphorylation. Plays a negative role in the regulation of HBV replication through a mechanism not involving the phosphorylation of the core protein but by reducing the packaging efficiency of the pregenomic RNA (pgRNA) without affecting the formation of the viral core particles. The polypeptide is SRSF protein kinase 2 (Homo sapiens (Human)).